The chain runs to 243 residues: Uridylate kinase (243 aa).

ATP is bound at residue 18–21; it reads KLGG. A UMP-binding site is contributed by glycine 59. Residues glycine 60 and arginine 64 each contribute to the ATP site. Residues aspartate 79 and 140–147 contribute to the UMP site; that span reads MGMPYFST. The ATP site is built by tyrosine 173 and aspartate 176.

Belongs to the UMP kinase family. In terms of assembly, homohexamer.

Its subcellular location is the cytoplasm. It catalyses the reaction UMP + ATP = UDP + ADP. The protein operates within pyrimidine metabolism; CTP biosynthesis via de novo pathway; UDP from UMP (UMPK route): step 1/1. Inhibited by UTP. Catalyzes the reversible phosphorylation of UMP to UDP. This is Uridylate kinase from Corynebacterium diphtheriae (strain ATCC 700971 / NCTC 13129 / Biotype gravis).